A 297-amino-acid polypeptide reads, in one-letter code: Acetyl-coenzyme A carboxylase carboxyl transferase subunit beta (297 aa).

The CoA carboxyltransferase N-terminal domain occupies 27-296 (LWHKCPSCEA…PVETSQVTAK (270 aa)). 4 residues coordinate Zn(2+): cysteine 31, cysteine 34, cysteine 50, and cysteine 53. The segment at 31–53 (CPSCEAVLYRPELEKTLDVCPKC) adopts a C4-type zinc-finger fold.

This sequence belongs to the AccD/PCCB family. As to quaternary structure, acetyl-CoA carboxylase is a heterohexamer composed of biotin carboxyl carrier protein (AccB), biotin carboxylase (AccC) and two subunits each of ACCase subunit alpha (AccA) and ACCase subunit beta (AccD). Requires Zn(2+) as cofactor.

The protein resides in the cytoplasm. The catalysed reaction is N(6)-carboxybiotinyl-L-lysyl-[protein] + acetyl-CoA = N(6)-biotinyl-L-lysyl-[protein] + malonyl-CoA. It participates in lipid metabolism; malonyl-CoA biosynthesis; malonyl-CoA from acetyl-CoA: step 1/1. Functionally, component of the acetyl coenzyme A carboxylase (ACC) complex. Biotin carboxylase (BC) catalyzes the carboxylation of biotin on its carrier protein (BCCP) and then the CO(2) group is transferred by the transcarboxylase to acetyl-CoA to form malonyl-CoA. This Stutzerimonas stutzeri (strain A1501) (Pseudomonas stutzeri) protein is Acetyl-coenzyme A carboxylase carboxyl transferase subunit beta.